The following is a 478-amino-acid chain: GDP-fucose protein O-fucosyltransferase 3 (478 aa).

Residues 1–9 are Cytoplasmic-facing; the sequence is MVRIQRGKL. Residues 10-30 form a helical; Signal-anchor for type II membrane protein membrane-spanning segment; the sequence is LAFCLCVMATVFLLITLQVVV. Residues 31-478 lie on the Lumenal side of the membrane; the sequence is ELGKFEGKKF…QEFWALVFKD (448 aa). Residues Asn110 and Asn168 are each glycosylated (N-linked (GlcNAc...) asparagine). An intrachain disulfide couples Cys389 to Cys392.

Belongs to the glycosyltransferase 10 family.

The protein resides in the endoplasmic reticulum membrane. It carries out the reaction L-threonyl-[protein] + GDP-beta-L-fucose = 3-O-(alpha-L-fucosyl)-L-threonyl-[protein] + GDP + H(+). It catalyses the reaction L-seryl-[protein] + GDP-beta-L-fucose = 3-O-(alpha-L-fucosyl)-L-seryl-[protein] + GDP + H(+). It functions in the pathway protein modification; protein glycosylation. Its function is as follows. Protein O-fucosyltransferase that specifically catalyzes O-fucosylation of serine or threonine residues in EMI domains of target proteins, such as MMRN1, MMRN2 and EMID1. Attaches fucose through an O-glycosidic linkage. O-fucosylation of EMI domain-containing proteins may be required for facilitating protein folding and secretion. May also show alpha-(1,3)-fucosyltransferase activity toward the innermost N-acetyl glucosamine (GlcNAc) residue in biantennary N-glycan acceptors. However, this was tested with a library of synthetic substrates and this activity is unsure in vivo. May be involved in biosynthesis of Lewis X-carrying biantennary N-glycans that regulate neuron stem cell self-renewal during brain development. This Bos taurus (Bovine) protein is GDP-fucose protein O-fucosyltransferase 3 (FUT10).